The chain runs to 360 residues: D-alanine--D-alanine ligase (360 aa).

The ATP-grasp domain occupies 146 to 352; that stretch reads KLCVADAGIA…YRNLITRLLE (207 aa). 179–234 contacts ATP; sequence EAQVSYPLFVKPASLGSSIGISKVHNREELHPALQAACALDWKVVVESTVKGREIE. The Mg(2+) site is built by D305, E319, and N321.

Belongs to the D-alanine--D-alanine ligase family. Requires Mg(2+) as cofactor. Mn(2+) is required as a cofactor.

The protein localises to the cytoplasm. It carries out the reaction 2 D-alanine + ATP = D-alanyl-D-alanine + ADP + phosphate + H(+). It participates in cell wall biogenesis; peptidoglycan biosynthesis. Its function is as follows. Cell wall formation. This Chlorobium chlorochromatii (strain CaD3) protein is D-alanine--D-alanine ligase.